Reading from the N-terminus, the 257-residue chain is MQKMTIHEAECLLQEIMNEEDERFQMLVKDERKGVQKLILKWYKQKELAQKEREKFLEMSKYENELREKGLTYIAGIDEVGRGPLAGPVVTAAVVLPEDFYIPGLNDSKKLSEAKRERFYDEIKDHAIAIGVGIISPQVIDEINIYQATKQAMLDAVANLSCTPEYLLIDAMKLPTSIPQTSIIKGDAKSVSISAASIIAKVTRDRMMKELGGKYPAYGFEQHMGYGTKQHLEAIEVHGVLEEHRKSFAPIKDMIQK.

An RNase H type-2 domain is found at 72–257 (TYIAGIDEVG…FAPIKDMIQK (186 aa)). Residues Asp78, Glu79, and Asp170 each contribute to the a divalent metal cation site.

It belongs to the RNase HII family. The cofactor is Mn(2+). Requires Mg(2+) as cofactor.

It localises to the cytoplasm. The enzyme catalyses Endonucleolytic cleavage to 5'-phosphomonoester.. In terms of biological role, endonuclease that specifically degrades the RNA of RNA-DNA hybrids. This is Ribonuclease HII from Bacillus mycoides (strain KBAB4) (Bacillus weihenstephanensis).